Here is a 185-residue protein sequence, read N- to C-terminus: Ribosome-recycling factor (185 aa).

Belongs to the RRF family.

The protein resides in the cytoplasm. In terms of biological role, responsible for the release of ribosomes from messenger RNA at the termination of protein biosynthesis. May increase the efficiency of translation by recycling ribosomes from one round of translation to another. The polypeptide is Ribosome-recycling factor (Xanthomonas oryzae pv. oryzae (strain MAFF 311018)).